The sequence spans 147 residues: NAD(P)H-quinone oxidoreductase subunit N (147 aa).

It belongs to the complex I NdhN subunit family. As to quaternary structure, NDH-1 can be composed of about 15 different subunits; different subcomplexes with different compositions have been identified which probably have different functions.

Its subcellular location is the cellular thylakoid membrane. It carries out the reaction a plastoquinone + NADH + (n+1) H(+)(in) = a plastoquinol + NAD(+) + n H(+)(out). The catalysed reaction is a plastoquinone + NADPH + (n+1) H(+)(in) = a plastoquinol + NADP(+) + n H(+)(out). NDH-1 shuttles electrons from an unknown electron donor, via FMN and iron-sulfur (Fe-S) centers, to quinones in the respiratory and/or the photosynthetic chain. The immediate electron acceptor for the enzyme in this species is believed to be plastoquinone. Couples the redox reaction to proton translocation, and thus conserves the redox energy in a proton gradient. Cyanobacterial NDH-1 also plays a role in inorganic carbon-concentration. This Synechococcus sp. (strain JA-3-3Ab) (Cyanobacteria bacterium Yellowstone A-Prime) protein is NAD(P)H-quinone oxidoreductase subunit N.